We begin with the raw amino-acid sequence, 339 residues long: Ribosomal RNA small subunit methyltransferase H (339 aa).

Residues 44–46 (GGY), Asp61, Phe88, Asp105, and Gln112 contribute to the S-adenosyl-L-methionine site. A disordered region spans residues 263-312 (PQAQSRHLPEKAAAQPVFEKPMKPVSPGEAETAENPRARSAHLRAARRTA). Basic residues predominate over residues 301–312 (RSAHLRAARRTA).

The protein belongs to the methyltransferase superfamily. RsmH family.

Its subcellular location is the cytoplasm. It catalyses the reaction cytidine(1402) in 16S rRNA + S-adenosyl-L-methionine = N(4)-methylcytidine(1402) in 16S rRNA + S-adenosyl-L-homocysteine + H(+). Functionally, specifically methylates the N4 position of cytidine in position 1402 (C1402) of 16S rRNA. The polypeptide is Ribosomal RNA small subunit methyltransferase H (Chelativorans sp. (strain BNC1)).